The following is a 449-amino-acid chain: AP-4 complex subunit mu-1 (449 aa).

In terms of domain architecture, MHD spans 184-448 (KNEVFLDVVE…LSHSNAYVIR (265 aa)).

The protein belongs to the adaptor complexes medium subunit family. Adaptor protein complex 4 (AP-4) is a heterotetramer composed of two large adaptins (epsilon-type subunit AP4E1 and beta-type subunit AP4B1), a medium adaptin (mu-type subunit AP4M1) and a small adaptin (sigma-type AP4S1). Interacts with tyrosine-based sorting signals on the cytoplasmic tail of cargo proteins such as APP, ATG9A, LAMP2 and NAGPA. Interacts with the C-terminal domain of GRID2. Interacts with GRIA1 and GRIA2; the interaction is indirect via CACNG3. Interacts with CACNG3; CACNG3 associates GRIA1 and GRIA2 with the adaptor protein complex 4 (AP-4) to target them to the somatodendritic compartment of neurons. Interacts with HOOK1 and HOOK2; the interactions are direct, mediate the interaction between FTS-Hook-FHIP (FHF) complex and AP-4 and the perinuclear distribution of AP-4.

Its subcellular location is the golgi apparatus. It is found in the trans-Golgi network membrane. The protein localises to the early endosome. Functionally, component of the adaptor protein complex 4 (AP-4). Adaptor protein complexes are vesicle coat components involved both in vesicle formation and cargo selection. They control the vesicular transport of proteins in different trafficking pathways. AP-4 forms a non clathrin-associated coat on vesicles departing the trans-Golgi network (TGN) and may be involved in the targeting of proteins from the trans-Golgi network (TGN) to the endosomal-lysosomal system. It is also involved in protein sorting to the basolateral membrane in epithelial cells and the proper asymmetric localization of somatodendritic proteins in neurons. Within AP-4, the mu-type subunit AP4M1 is directly involved in the recognition and binding of tyrosine-based sorting signals found in the cytoplasmic part of cargos. The adaptor protein complex 4 (AP-4) may also recognize other types of sorting signal. This is AP-4 complex subunit mu-1 from Mus musculus (Mouse).